Here is a 236-residue protein sequence, read N- to C-terminus: Ribonuclease HII (236 aa).

Residues 21–214 (RTVAGVDEVG…LDALPRWQHL (194 aa)) enclose the RNase H type-2 domain. Asp27, Glu28, and Asp119 together coordinate a divalent metal cation.

It belongs to the RNase HII family. Mn(2+) serves as cofactor. The cofactor is Mg(2+).

The protein localises to the cytoplasm. It carries out the reaction Endonucleolytic cleavage to 5'-phosphomonoester.. In terms of biological role, endonuclease that specifically degrades the RNA of RNA-DNA hybrids. The sequence is that of Ribonuclease HII from Streptomyces griseus subsp. griseus (strain JCM 4626 / CBS 651.72 / NBRC 13350 / KCC S-0626 / ISP 5235).